We begin with the raw amino-acid sequence, 1152 residues long: MSLTDQKPRIERFGEITEVIPLPNLTEVQVNSFKAFLQADKAPDERDDTGLQSAFREVFPIDETEKGRSTGLVLDFLEYRLGEPPYTPEECREKDLTYQAPLYAKLQLIHKDSGLIKEDQVFLGDLPLMTDDGSFVINGADRVVISQIHRSPGVYFTSSYKGIKKMYTAAIIPMPKRGPWIELEFNGGVLEMKVNKRKFPVSLLLRVLGYDDAQLKALFTEFDPAAELPEDKSAGMNPDEALLRLFTVLRPGDPPKRDKAIQYLYGLLADPKRYDLGEPGRFKMNTKLGTRRQDRTLLTFEDGRFGDAGLVDTIRYLMALQQGLETVTMGADEDGVAIEVPVTEDDIDHLGNRRVRTVGELLADQLRVGMGRMARGVRERMLLGNPDAATPTKLVNNRPIVAAMREFFGRSQLSQFKDQTNPLSDLRHKRRISALGPGGLTRERAGFDVRDVHRTHYGRICPIETPEGANIGLISSLSSYAKVNDLGFIEAPYRRVVDGRVTDDVVYMTADIEDRYVIAQANSPLNPDGTFAEERVLARKKGDPMLYAPTEVDFMDVSPKQIVSINTSLIPFLEHDDANRALMGSNMQSQAVPLVRADSPAVGTGVEERVVTDSGTSVISDVTGRVTYVDARAIQVTLTEDAPQIGLVKGNVRTFELVRFTRSNQGTNLDQHPIVSVGDEVVPGQVIADGPASDQGRLALGQNITIAIMPFDGFNFEDAICISEGLVRKDFYTSVHIEKDEIEARDTKLGPEKITRDIPGLSEAALRDLDEDGIVRVGAEVKPGDILVGKTSFKGESEPTPEERLLRSIFGEKAREVKDTSLRVQSGQGGIVVKTVRFRRGDEGVDLKPGVREMVRVYVAQKRQLQVGDKVANRHGNKGVVSKILPPEDMPYLEDGTPVDLVFNPLGVPSRMNLGQILETHLGEVARLTGQKFVTPVFDSATEEAIKEMLEVAAAERLQRRKDEGFELDKREQEVLDRAGKLGVISPPNGDYAAAQMQLARTGKSVLYDGRTGEPISGPVVVGTMYVMKLYHMVEDKLHARSTGPYSLITQQPLGGKAQFGGQRFGEMEVWALEAYGAAHTLQEMLTIKSDDIDGRDAAYQSIVKGEEVSGSTIPESFKVLVKELHSLGLDVEVLDNNDKPVDIFEGMMPKR.

The protein belongs to the RNA polymerase beta chain family. In terms of assembly, the RNAP catalytic core consists of 2 alpha, 1 beta, 1 beta' and 1 omega subunit. When a sigma factor is associated with the core the holoenzyme is formed, which can initiate transcription.

The enzyme catalyses RNA(n) + a ribonucleoside 5'-triphosphate = RNA(n+1) + diphosphate. Its function is as follows. DNA-dependent RNA polymerase catalyzes the transcription of DNA into RNA using the four ribonucleoside triphosphates as substrates. In Deinococcus geothermalis (strain DSM 11300 / CIP 105573 / AG-3a), this protein is DNA-directed RNA polymerase subunit beta.